A 952-amino-acid polypeptide reads, in one-letter code: DNA topoisomerase 1 (952 aa).

The Toprim domain occupies 12–135 (RRLVIVESPA…VKRMVFHEIT (124 aa)). Positions 18 and 104 each coordinate Mg(2+). In terms of domain architecture, Topo IA-type catalytic spans 150–602 (NQKLVDAQET…RFYFGEGDGT (453 aa)). The interaction with DNA stretch occupies residues 184–189 (SAGRVQ). Y334 functions as the O-(5'-phospho-DNA)-tyrosine intermediate in the catalytic mechanism. Residues 847–952 (RFGPYVTDGE…KATASKTSED (106 aa)) form a disordered region. Basic and acidic residues predominate over residues 871 to 884 (TPERGYELLAEKRA). Basic residues predominate over residues 885 to 906 (KGPAKKTAKKAVKKTAAKKAPA). Low complexity-rich tracts occupy residues 907–930 (KKAA…AAKS) and 937–952 (AKTA…TSED).

The protein belongs to the type IA topoisomerase family. In terms of assembly, monomer. It depends on Mg(2+) as a cofactor.

The enzyme catalyses ATP-independent breakage of single-stranded DNA, followed by passage and rejoining.. Releases the supercoiling and torsional tension of DNA, which is introduced during the DNA replication and transcription, by transiently cleaving and rejoining one strand of the DNA duplex. Introduces a single-strand break via transesterification at a target site in duplex DNA. The scissile phosphodiester is attacked by the catalytic tyrosine of the enzyme, resulting in the formation of a DNA-(5'-phosphotyrosyl)-enzyme intermediate and the expulsion of a 3'-OH DNA strand. The free DNA strand then undergoes passage around the unbroken strand, thus removing DNA supercoils. Finally, in the religation step, the DNA 3'-OH attacks the covalent intermediate to expel the active-site tyrosine and restore the DNA phosphodiester backbone. Functionally, relaxes supercoiled plasmid in vitro; in the presence of sIHF (integration host factor) relaxation is decreased. The sequence is that of DNA topoisomerase 1 from Streptomyces coelicolor (strain ATCC BAA-471 / A3(2) / M145).